The following is a 134-amino-acid chain: Small ribosomal subunit protein uS8c (134 aa).

This sequence belongs to the universal ribosomal protein uS8 family. In terms of assembly, part of the 30S ribosomal subunit.

It localises to the plastid. The protein resides in the chloroplast. One of the primary rRNA binding proteins, it binds directly to 16S rRNA central domain where it helps coordinate assembly of the platform of the 30S subunit. The sequence is that of Small ribosomal subunit protein uS8c (rps8) from Cucumis sativus (Cucumber).